We begin with the raw amino-acid sequence, 368 residues long: Serine/threonine-protein kinase CAK1 (368 aa).

The region spanning 1–368 (MKLDSIDITH…QRILQELEKP (368 aa)) is the Protein kinase domain. The active-site Proton acceptor is the D156.

This sequence belongs to the protein kinase superfamily. CMGC Ser/Thr protein kinase family. CDC2/CDKX subfamily.

The enzyme catalyses L-seryl-[protein] + ATP = O-phospho-L-seryl-[protein] + ADP + H(+). It catalyses the reaction L-threonyl-[protein] + ATP = O-phospho-L-threonyl-[protein] + ADP + H(+). This Saccharomyces cerevisiae (strain ATCC 204508 / S288c) (Baker's yeast) protein is Serine/threonine-protein kinase CAK1 (CAK1).